Consider the following 513-residue polypeptide: ATP synthase subunit alpha (513 aa).

An ATP-binding site is contributed by 169 to 176 (GDRQTGKS).

This sequence belongs to the ATPase alpha/beta chains family. F-type ATPases have 2 components, CF(1) - the catalytic core - and CF(0) - the membrane proton channel. CF(1) has five subunits: alpha(3), beta(3), gamma(1), delta(1), epsilon(1). CF(0) has three main subunits: a(1), b(2) and c(9-12). The alpha and beta chains form an alternating ring which encloses part of the gamma chain. CF(1) is attached to CF(0) by a central stalk formed by the gamma and epsilon chains, while a peripheral stalk is formed by the delta and b chains.

It is found in the cell inner membrane. It catalyses the reaction ATP + H2O + 4 H(+)(in) = ADP + phosphate + 5 H(+)(out). Functionally, produces ATP from ADP in the presence of a proton gradient across the membrane. The alpha chain is a regulatory subunit. The sequence is that of ATP synthase subunit alpha from Blochmanniella floridana.